A 356-amino-acid polypeptide reads, in one-letter code: UDP-N-acetylglucosamine--N-acetylmuramyl-(pentapeptide) pyrophosphoryl-undecaprenol N-acetylglucosamine transferase (356 aa).

UDP-N-acetyl-alpha-D-glucosamine-binding positions include 15–17, Asn-127, Arg-163, Ser-191, Ile-244, 263–268, and Gln-288; these read TGG and ALTVSE.

This sequence belongs to the glycosyltransferase 28 family. MurG subfamily.

It is found in the cell inner membrane. It catalyses the reaction di-trans,octa-cis-undecaprenyl diphospho-N-acetyl-alpha-D-muramoyl-L-alanyl-D-glutamyl-meso-2,6-diaminopimeloyl-D-alanyl-D-alanine + UDP-N-acetyl-alpha-D-glucosamine = di-trans,octa-cis-undecaprenyl diphospho-[N-acetyl-alpha-D-glucosaminyl-(1-&gt;4)]-N-acetyl-alpha-D-muramoyl-L-alanyl-D-glutamyl-meso-2,6-diaminopimeloyl-D-alanyl-D-alanine + UDP + H(+). It functions in the pathway cell wall biogenesis; peptidoglycan biosynthesis. In terms of biological role, cell wall formation. Catalyzes the transfer of a GlcNAc subunit on undecaprenyl-pyrophosphoryl-MurNAc-pentapeptide (lipid intermediate I) to form undecaprenyl-pyrophosphoryl-MurNAc-(pentapeptide)GlcNAc (lipid intermediate II). This is UDP-N-acetylglucosamine--N-acetylmuramyl-(pentapeptide) pyrophosphoryl-undecaprenol N-acetylglucosamine transferase from Klebsiella pneumoniae (strain 342).